A 347-amino-acid polypeptide reads, in one-letter code: Guanine nucleotide-binding protein alpha-6 subunit (347 aa).

Residues 30-347 (GITQVLLLGA…IIVGHVMDLV (318 aa)) form the G-alpha domain. The G1 motif stretch occupies residues 33–46 (QVLLLGAGESGKST). Residues 38–45 (GAGESGKS), 172–178 (LRARVTT), 197–201 (DVGGQ), 266–269 (NKKD), and alanine 322 contribute to the GTP site. Residues serine 45 and threonine 178 each contribute to the Mg(2+) site. The segment at 170 to 178 (DALRARVTT) is G2 motif. The G3 motif stretch occupies residues 193-202 (MKIIDVGGQR). The interval 262–269 (ILFLNKKD) is G4 motif. The G5 motif stretch occupies residues 320-325 (TIAVDT).

The protein belongs to the G-alpha family. As to quaternary structure, g proteins are composed of 3 units; alpha, beta and gamma. The alpha chain contains the guanine nucleotide binding site.

In terms of biological role, guanine nucleotide-binding proteins (G proteins) are involved as modulators or transducers in various transmembrane signaling systems. G alpha-6 is involved in the folic acid chemotaxis signal transduction pathway. The protein is Guanine nucleotide-binding protein alpha-6 subunit (gpaF) of Dictyostelium discoideum (Social amoeba).